A 602-amino-acid chain; its full sequence is Ligand-dependent nuclear receptor corepressor-like protein (602 aa).

Positions 104–124 are disordered; it reads PSLDSSQSTPTEELSSQGQSN. A compositionally biased stretch (polar residues) spans 106-124; it reads LDSSQSTPTEELSSQGQSN. Glycyl lysine isopeptide (Lys-Gly) (interchain with G-Cter in SUMO2) cross-links involve residues Lys242, Lys319, Lys340, and Lys397. Disordered regions lie at residues 495–521 and 564–602; these read TVDGTSENTEDGLDRKDSKQPRKKRGR and ERSGTLKTPPKKKLRLPDTGLYNMTDSGTGSCKNSSKPV. The HTH psq-type domain occupies 516–568; it reads RKKRGRYRQYDHEIMEEAIAMVMSGKMSVSKAQGIYGVPHSTLEYKVKERSGT. Positions 544–564 form a DNA-binding region, H-T-H motif; sequence VSKAQGIYGVPHSTLEYKVKE. The span at 585–602 shows a compositional bias: polar residues; sequence YNMTDSGTGSCKNSSKPV.

It is found in the nucleus. In terms of biological role, may act as transcription activator that binds DNA elements with the sequence 5'-CCCTATCGATCGATCTCTACCT-3'. May play a role in spermatogenesis. This chain is Ligand-dependent nuclear receptor corepressor-like protein (LCORL), found in Homo sapiens (Human).